We begin with the raw amino-acid sequence, 253 residues long: Nurim homolog (253 aa).

Residues 1 to 2 lie on the Nuclear side of the membrane; it reads MT. The chain crosses the membrane as a helical span at residues 3–30; the sequence is SIAKSIVLLASLATFAYSLYVVGSLMMF. Over 31 to 56 the chain is Perinuclear space; the sequence is LSTPRSISKAHTWIFNLLDNKSRLQT. The chain crosses the membrane as a helical span at residues 57–78; the sequence is AYGPVVFDTLYLIGFIFQHSFL. The Nuclear segment spans residues 79–96; that stretch reads KSAVVKKLLAKLGLSGAE. The helical transmembrane segment at 97–113 threads the bilayer; that stretch reads RTIYSLTSSLCLHYLIV. The Perinuclear space segment spans residues 114 to 132; it reads NWLPAQSIVLWQIDVEQSA. The helical transmembrane segment at 133 to 161 threads the bilayer; it reads PLWWTFVITHGICWVVIFGGSLVMDLPEL. The Nuclear segment spans residues 162–188; the sequence is LGVKQAYYDLKAYGPPISYKSGELRNL. The helical transmembrane segment at 189-207 threads the bilayer; that stretch reads YAHVRHPSFVGLSVILFAT. Over 208-213 the chain is Perinuclear space; the sequence is NVMSVD. The chain crosses the membrane as a helical span at residues 214–231; sequence RLVMALLLTTYMYLAWST. The Nuclear portion of the chain corresponds to 232-253; that stretch reads DQKDVAYQKIQLQRKKLELKAK.

The protein belongs to the nurim family.

The protein localises to the nucleus inner membrane. The polypeptide is Nurim homolog (nrm) (Drosophila melanogaster (Fruit fly)).